The sequence spans 280 residues: Adenosylcobinamide-GDP ribazoletransferase (280 aa).

6 helical membrane-spanning segments follow: residues 44-64 (GVGV…LFVL), 69-89 (STPL…TGAF), 111-131 (LVIM…MLAL), 135-155 (VALL…ALFV), 189-209 (ISVA…ALVI), and 226-246 (ALLQ…AVMA).

The protein belongs to the CobS family. Mg(2+) is required as a cofactor.

The protein localises to the cell inner membrane. It catalyses the reaction alpha-ribazole + adenosylcob(III)inamide-GDP = adenosylcob(III)alamin + GMP + H(+). The enzyme catalyses alpha-ribazole 5'-phosphate + adenosylcob(III)inamide-GDP = adenosylcob(III)alamin 5'-phosphate + GMP + H(+). It participates in cofactor biosynthesis; adenosylcobalamin biosynthesis; adenosylcobalamin from cob(II)yrinate a,c-diamide: step 7/7. Functionally, joins adenosylcobinamide-GDP and alpha-ribazole to generate adenosylcobalamin (Ado-cobalamin). Also synthesizes adenosylcobalamin 5'-phosphate from adenosylcobinamide-GDP and alpha-ribazole 5'-phosphate. In Albidiferax ferrireducens (strain ATCC BAA-621 / DSM 15236 / T118) (Rhodoferax ferrireducens), this protein is Adenosylcobinamide-GDP ribazoletransferase.